Reading from the N-terminus, the 454-residue chain is tRNA modification GTPase MnmE (454 aa).

The (6S)-5-formyl-5,6,7,8-tetrahydrofolate site is built by Arg-23, Glu-80, and Lys-120. Residues 216 to 377 enclose the TrmE-type G domain; sequence GMKVVIAGRP…LRDHLKQSMG (162 aa). Asn-226 is a K(+) binding site. Residues 226-231, 245-251, 270-273, 335-338, and 358-360 contribute to the GTP site; these read NAGKSS, TDIAGTT, DTAG, NKAD, and SAR. Residue Ser-230 participates in Mg(2+) binding. The K(+) site is built by Thr-245, Ile-247, and Thr-250. Thr-251 serves as a coordination point for Mg(2+). Lys-454 is a (6S)-5-formyl-5,6,7,8-tetrahydrofolate binding site.

Belongs to the TRAFAC class TrmE-Era-EngA-EngB-Septin-like GTPase superfamily. TrmE GTPase family. As to quaternary structure, homodimer. Heterotetramer of two MnmE and two MnmG subunits. It depends on K(+) as a cofactor.

Its subcellular location is the cytoplasm. Exhibits a very high intrinsic GTPase hydrolysis rate. Involved in the addition of a carboxymethylaminomethyl (cmnm) group at the wobble position (U34) of certain tRNAs, forming tRNA-cmnm(5)s(2)U34. The chain is tRNA modification GTPase MnmE from Serratia proteamaculans (strain 568).